Reading from the N-terminus, the 75-residue chain is UPF0270 protein Avin_35000 (75 aa).

It belongs to the UPF0270 family.

The protein is UPF0270 protein Avin_35000 of Azotobacter vinelandii (strain DJ / ATCC BAA-1303).